Reading from the N-terminus, the 199-residue chain is Molybdenum cofactor guanylyltransferase (199 aa).

GTP is bound by residues 12 to 14 (LAG), K25, N53, D71, and D101. D101 serves as a coordination point for Mg(2+).

Belongs to the MobA family. Monomer. Mg(2+) serves as cofactor.

The protein localises to the cytoplasm. It carries out the reaction Mo-molybdopterin + GTP + H(+) = Mo-molybdopterin guanine dinucleotide + diphosphate. Functionally, transfers a GMP moiety from GTP to Mo-molybdopterin (Mo-MPT) cofactor (Moco or molybdenum cofactor) to form Mo-molybdopterin guanine dinucleotide (Mo-MGD) cofactor. The protein is Molybdenum cofactor guanylyltransferase of Cupriavidus pinatubonensis (strain JMP 134 / LMG 1197) (Cupriavidus necator (strain JMP 134)).